Reading from the N-terminus, the 284-residue chain is tRNA-cytidine(32) 2-sulfurtransferase (284 aa).

Positions M1 to A11 are enriched in polar residues. The interval M1–P20 is disordered. A PP-loop motif motif is present at residues S63–S68. Residues C138, C141, and C229 each contribute to the [4Fe-4S] cluster site.

The protein belongs to the TtcA family. Homodimer. Requires Mg(2+) as cofactor. [4Fe-4S] cluster is required as a cofactor.

Its subcellular location is the cytoplasm. It catalyses the reaction cytidine(32) in tRNA + S-sulfanyl-L-cysteinyl-[cysteine desulfurase] + AH2 + ATP = 2-thiocytidine(32) in tRNA + L-cysteinyl-[cysteine desulfurase] + A + AMP + diphosphate + H(+). The protein operates within tRNA modification. In terms of biological role, catalyzes the ATP-dependent 2-thiolation of cytidine in position 32 of tRNA, to form 2-thiocytidine (s(2)C32). The sulfur atoms are provided by the cysteine/cysteine desulfurase (IscS) system. The chain is tRNA-cytidine(32) 2-sulfurtransferase from Chelativorans sp. (strain BNC1).